A 33-amino-acid chain; its full sequence is uncharacterized protein (33 aa).

A disordered region spans residues 1-33 (MGSVIKKRRKRMSKKKHRKLLRRTRVQRRKLGK).

This is an uncharacterized protein from Mycobacterium tuberculosis (strain CDC 1551 / Oshkosh).